The chain runs to 472 residues: Protein PIN-LIKES 1 (472 aa).

Topologically, residues 1–93 (MSLTQSAKLH…FYSMRMRLLD (93 aa)) are lumenal. The helical transmembrane segment at 94 to 114 (LFITSSIPVAKILLITGIGFY) threads the bilayer. Over 115–133 (LALDQVNILNHDARKQLNN) the chain is Cytoplasmic. The chain crosses the membrane as a helical span at residues 134-154 (IVFYVFSPSLVASSLSETITY). The Lumenal segment spans residues 155 to 161 (ESMVKMW). The chain crosses the membrane as a helical span at residues 162–182 (FMPLNVLLTFIIGSFLGWIVI). Topologically, residues 183–193 (KITKPPSHLRG) are cytoplasmic. The chain crosses the membrane as a helical span at residues 194 to 214 (IIVGCCAAGNLGNMPLIIIPA). The Lumenal segment spans residues 215–231 (ICNEKGSPFGDPESCEK). A helical transmembrane segment spans residues 232–252 (FGLGYIALSMAIGAIYIWTYV). Residues 253-309 (YNLMRMLANPAGETAINSTSSTMPLISPKVEVAEQVGTWGKVKQRVCSVAEKINLRT) are Cytoplasmic-facing. The chain crosses the membrane as a helical span at residues 310–330 (IFAPSTIAALIALAVGLNPLL). At 331 to 347 (RKLLVGNTAPLRVIEDS) the chain is on the lumenal side. A helical transmembrane segment spans residues 348–368 (VSLLGDGAIPVLTLIVGGNLL). Residues 369–379 (NGLRGSGINKS) lie on the Cytoplasmic side of the membrane. A helical transmembrane segment spans residues 380–400 (VIMGVVVVRYLLLPILGVFIV). Residues 401-413 (RGAHYLGLVTSEP) lie on the Lumenal side of the membrane. The chain crosses the membrane as a helical span at residues 414 to 434 (LYQFVLLLQYVVPPAMNLGTI). Residues 435–446 (TQLFGSGESECS) lie on the Cytoplasmic side of the membrane. Residues 447–467 (VILFWSYALASVSLTVWPTFF) form a helical membrane-spanning segment. At 468–472 (MWLVA) the chain is on the lumenal side.

Belongs to the auxin efflux carrier (TC 2.A.69.2) family. As to expression, expressed in flowers.

The protein localises to the endoplasmic reticulum membrane. Involved in cellular auxin homeostasis by regulating auxin metabolism. Regulates intracellular auxin accumulation at the endoplasmic reticulum and thus auxin availability for nuclear auxin signaling. In Arabidopsis thaliana (Mouse-ear cress), this protein is Protein PIN-LIKES 1.